Reading from the N-terminus, the 207-residue chain is dTTP/UTP pyrophosphatase (207 aa).

The Proton acceptor role is filled by Asp79.

The protein belongs to the Maf family. YhdE subfamily. A divalent metal cation serves as cofactor.

The protein resides in the cytoplasm. It catalyses the reaction dTTP + H2O = dTMP + diphosphate + H(+). It carries out the reaction UTP + H2O = UMP + diphosphate + H(+). Nucleoside triphosphate pyrophosphatase that hydrolyzes dTTP and UTP. May have a dual role in cell division arrest and in preventing the incorporation of modified nucleotides into cellular nucleic acids. This Rhodopseudomonas palustris (strain BisB18) protein is dTTP/UTP pyrophosphatase.